The following is a 585-amino-acid chain: Arginine--tRNA ligase (585 aa).

Residues 126-136 (PNIAKEMHVGH) carry the 'HIGH' region motif.

The protein belongs to the class-I aminoacyl-tRNA synthetase family. As to quaternary structure, monomer.

It is found in the cytoplasm. The catalysed reaction is tRNA(Arg) + L-arginine + ATP = L-arginyl-tRNA(Arg) + AMP + diphosphate. In Picosynechococcus sp. (strain ATCC 27264 / PCC 7002 / PR-6) (Agmenellum quadruplicatum), this protein is Arginine--tRNA ligase.